A 131-amino-acid polypeptide reads, in one-letter code: Profilin-2 (131 aa).

Cys-13 and Cys-115 are joined by a disulfide. Residues Ala-81–Thr-97 carry the Involved in PIP2 interaction motif. Phosphothreonine is present on Thr-111.

Belongs to the profilin family. As to quaternary structure, occurs in many kinds of cells as a complex with monomeric actin in a 1:1 ratio. Post-translationally, phosphorylated by MAP kinases. Pollen specific.

Its subcellular location is the cytoplasm. It localises to the cytoskeleton. In terms of biological role, binds to actin and affects the structure of the cytoskeleton. At high concentrations, profilin prevents the polymerization of actin, whereas it enhances it at low concentrations. By binding to PIP2, it inhibits the formation of IP3 and DG. In Zea mays (Maize), this protein is Profilin-2 (PRO2).